A 217-amino-acid polypeptide reads, in one-letter code: SCRKKASQLNLTPEQQRFDPRYIELVIVADHSMVTKYDGDLAAIRTWAHQLVNNIIVFYRDLNVHITLSAVEVWTNGDLINVQPAASVTLNLFGEWRERDLLNRRMHDHAQLLTAINLDDNTIGLAYNEGMCDPKYSVGIVQDHSAINRMVAATMAHEIGHNLGMDHDGNQCNCGANGCVMSAVITQQRSYQFSDCSKNKYQTYLTNHNPQCILNQP.

Positions 1-14 (SCRKKASQLNLTPE) are excised as a propeptide. At Q15 the chain carries Pyrrolidone carboxylic acid. The 197-residue stretch at 21 to 217 (RYIELVIVAD…HNPQCILNQP (197 aa)) folds into the Peptidase M12B domain. The Ca(2+) site is built by E24 and D108. 3 disulfide bridges follow: C132–C212, C172–C196, and C174–C179. Position 157 (H157) interacts with Zn(2+). E158 is an active-site residue. The Zn(2+) site is built by H161 and H167. 2 residues coordinate Ca(2+): C212 and N215.

Belongs to the venom metalloproteinase (M12B) family. P-I subfamily. In terms of assembly, monomer. It depends on Zn(2+) as a cofactor. Expressed by the venom gland.

It localises to the secreted. Fibrinolytic and caseinolytic activities are inhibited by Cd(2+), Cu(2+) and Co(2+) ions. Not inhibited by Mg(2+), Ca(2+) and Ba(2+). Also inhibited by EDTA, EGTA and 1,10-phenanthroline. Snake venom zinc metalloprotease that hydrolyzes the Aalpha-chain and more slowly the Bbeta-chain of fibrin and fibrinogen. Also hydrolyzes casein and B-chain of oxidized insulin. Its fibrinolytic activity is direct, without any plasminogen activation. Inhibits ADP-induced and collagen-induced platelet aggregation. Shows low hemorrhagic activity. Cleaves the plasma proteinase inhibitors alpha(2)-macroglobulin (A2M) and alpha(2)M-related pregnancy zone protein (PZP), and is inhibited by them. The protein is Snake venom metalloproteinase lebetase-4 of Macrovipera lebetinus (Levantine viper).